Here is a 317-residue protein sequence, read N- to C-terminus: tRNA dimethylallyltransferase (317 aa).

ATP is bound at residue 19–26 (GPTASGKS). A substrate-binding site is contributed by 21-26 (TASGKS). Residues 44–47 (DSMQ) form an interaction with substrate tRNA region.

It belongs to the IPP transferase family. Monomer. The cofactor is Mg(2+).

It catalyses the reaction adenosine(37) in tRNA + dimethylallyl diphosphate = N(6)-dimethylallyladenosine(37) in tRNA + diphosphate. In terms of biological role, catalyzes the transfer of a dimethylallyl group onto the adenine at position 37 in tRNAs that read codons beginning with uridine, leading to the formation of N6-(dimethylallyl)adenosine (i(6)A). This chain is tRNA dimethylallyltransferase, found in Methylorubrum populi (strain ATCC BAA-705 / NCIMB 13946 / BJ001) (Methylobacterium populi).